The sequence spans 168 residues: Nicotinamide-nucleotide adenylyltransferase (168 aa).

10 residues coordinate ATP: arginine 8, phenylalanine 9, histidine 13, histidine 16, phenylalanine 119, arginine 121, tyrosine 124, glycine 126, threonine 127, and arginine 130.

It belongs to the archaeal NMN adenylyltransferase family. Homohexamer existing as a trimer of dimers.

The protein localises to the cytoplasm. The enzyme catalyses beta-nicotinamide D-ribonucleotide + ATP + H(+) = diphosphate + NAD(+). It functions in the pathway cofactor biosynthesis; NAD(+) biosynthesis; NAD(+) from nicotinamide D-ribonucleotide: step 1/1. Functionally, catalyzes the formation of NAD(+) from nicotinamide mononucleotide (NMN) and ATP. The protein is Nicotinamide-nucleotide adenylyltransferase of Methanocaldococcus jannaschii (strain ATCC 43067 / DSM 2661 / JAL-1 / JCM 10045 / NBRC 100440) (Methanococcus jannaschii).